The following is a 147-amino-acid chain: Large ribosomal subunit protein bL9 (147 aa).

The protein belongs to the bacterial ribosomal protein bL9 family.

In terms of biological role, binds to the 23S rRNA. This chain is Large ribosomal subunit protein bL9, found in Caldanaerobacter subterraneus subsp. tengcongensis (strain DSM 15242 / JCM 11007 / NBRC 100824 / MB4) (Thermoanaerobacter tengcongensis).